Here is a 180-residue protein sequence, read N- to C-terminus: Der GTPase-activating protein YihI (180 aa).

Over residues 1-10 (MKQPARTSQV) the composition is skewed to polar residues. Disordered regions lie at residues 1–102 (MKQP…PRLT) and 158–180 (DAEDEKAEEDMYRLLKGSHRTPE). Basic and acidic residues predominate over residues 21 to 32 (TREEINQEARDR). Positions 45–54 (SRANPATVSQ) are enriched in polar residues. Positions 55 to 67 (KGDKSQSVKDPRI) are enriched in basic and acidic residues. The segment covering 84-93 (PANPVKAAKP) has biased composition (low complexity).

It belongs to the YihI family. As to quaternary structure, interacts with Der.

Functionally, a GTPase-activating protein (GAP) that modifies Der/EngA GTPase function. May play a role in ribosome biogenesis. This Erwinia tasmaniensis (strain DSM 17950 / CFBP 7177 / CIP 109463 / NCPPB 4357 / Et1/99) protein is Der GTPase-activating protein YihI.